The following is a 258-amino-acid chain: Large ribosomal subunit protein uL5c (258 aa).

A chloroplast-targeting transit peptide spans 1–38; sequence MASTSLLQSTSSSFAGVRFHCRTSAAPRVGLSSFTVKA.

Component of the chloroplast large ribosomal subunit (LSU). Mature 70S chloroplast ribosomes of higher plants consist of a small (30S) and a large (50S) subunit. The 30S small subunit contains 1 molecule of ribosomal RNA (16S rRNA) and 24 different proteins. The 50S large subunit contains 3 rRNA molecules (23S, 5S and 4.5S rRNA) and 33 different proteins.

The protein resides in the plastid. It is found in the chloroplast. Its function is as follows. Component of the chloroplast ribosome (chloro-ribosome), a dedicated translation machinery responsible for the synthesis of chloroplast genome-encoded proteins, including proteins of the transcription and translation machinery and components of the photosynthetic apparatus. This chain is Large ribosomal subunit protein uL5c (RPL5), found in Spinacia oleracea (Spinach).